The primary structure comprises 445 residues: MKTPKNDVYTVSRLNGEVRQLLEGQLGRIWLNAEISNFAAPGSGHWYLTLKDNFSQIRCAMFKGRNQAVTFRPANGQQVLVKGNISVYEPRGDYQLLIESMLPAGDGLLAQQYEALKMKLAAEGLFASDTKRPLPANIQKIGVVTSPTGAAIRDILHVLARRDSSIEVIIYPTPVQGSDAAKSICDAINLANSRAEVDVLLVTRGGGSLEDLWSFNDEGLAHTIYNSGIPVVSAVGHEVDMTISDYVADLRAPTPSAGAELLSKDADNKAQKLLSQLSRLKQAWQHYQLKKQSQVQTIEHRLQKQDPQRRLQMYEQSFDEMQLRLQQAMQTKLHAYALKQQNLSSRLANQSPQHRLTLEAQRLSYLSAKLNDAMDDKLKMSEQRLAHRAQQLDTVSPLATLSRGYSITLTGSGKVVQAPSDTCVGDTLTTRLRDGSVTSTVVEVS.

The protein belongs to the XseA family. Heterooligomer composed of large and small subunits.

Its subcellular location is the cytoplasm. The enzyme catalyses Exonucleolytic cleavage in either 5'- to 3'- or 3'- to 5'-direction to yield nucleoside 5'-phosphates.. Its function is as follows. Bidirectionally degrades single-stranded DNA into large acid-insoluble oligonucleotides, which are then degraded further into small acid-soluble oligonucleotides. The polypeptide is Exodeoxyribonuclease 7 large subunit (Shewanella pealeana (strain ATCC 700345 / ANG-SQ1)).